The chain runs to 179 residues: ATP-dependent protease subunit HslV (179 aa).

Residue T6 is part of the active site. Na(+)-binding residues include S164, C167, and T170.

It belongs to the peptidase T1B family. HslV subfamily. In terms of assembly, a double ring-shaped homohexamer of HslV is capped on each side by a ring-shaped HslU homohexamer. The assembly of the HslU/HslV complex is dependent on binding of ATP.

It localises to the cytoplasm. The catalysed reaction is ATP-dependent cleavage of peptide bonds with broad specificity.. Its activity is regulated as follows. Allosterically activated by HslU binding. Its function is as follows. Protease subunit of a proteasome-like degradation complex believed to be a general protein degrading machinery. This chain is ATP-dependent protease subunit HslV, found in Listeria monocytogenes serotype 4b (strain CLIP80459).